Reading from the N-terminus, the 250-residue chain is ATP synthase subunit a (250 aa).

6 helical membrane-spanning segments follow: residues Phe27 to Phe47, Phe85 to Ile105, Leu115 to Val135, Phe141 to Ile161, Met181 to Ala201, and Glu223 to Asn243.

The protein belongs to the ATPase A chain family. F-type ATPases have 2 components, CF(1) - the catalytic core - and CF(0) - the membrane proton channel. CF(1) has five subunits: alpha(3), beta(3), gamma(1), delta(1), epsilon(1). CF(0) has three main subunits: a(1), b(2) and c(9-12). The alpha and beta chains form an alternating ring which encloses part of the gamma chain. CF(1) is attached to CF(0) by a central stalk formed by the gamma and epsilon chains, while a peripheral stalk is formed by the delta and b chains.

It is found in the cell inner membrane. Functionally, key component of the proton channel; it plays a direct role in the translocation of protons across the membrane. The protein is ATP synthase subunit a of Xanthobacter autotrophicus (strain ATCC BAA-1158 / Py2).